The following is a 137-amino-acid chain: Protein PsiE homolog (137 aa).

4 helical membrane passes run 13-35 (ILLR…AFLI), 55-77 (YYMT…IVKY), 84-103 (FPLR…FIIV), and 107-129 (SATS…FLAN).

The protein belongs to the PsiE family.

It is found in the cell membrane. The sequence is that of Protein PsiE homolog from Listeria monocytogenes serotype 4b (strain F2365).